A 403-amino-acid polypeptide reads, in one-letter code: Alpha-1-antiproteinase F (403 aa).

The signal sequence occupies residues 1-22 (SAIPRGLLLLAGLCCLVFGIMA). 5 N-linked (GlcNAc...) asparagine glycosylation sites follow: asparagine 55, asparagine 92, asparagine 155, asparagine 222, and asparagine 256. The interval 358–377 (GATELEITPHSVPQDLFFNK) is RCL.

It belongs to the serpin family.

The protein resides in the secreted. In terms of biological role, inhibits elastase, chymotrypsin, cathepsin G, plasmin, and trypsin. The polypeptide is Alpha-1-antiproteinase F (Cavia porcellus (Guinea pig)).